We begin with the raw amino-acid sequence, 239 residues long: tRNA (guanine-N(1)-)-methyltransferase (239 aa).

S-adenosyl-L-methionine contacts are provided by residues Gly-110 and 130 to 135 (VGDYVL).

Belongs to the RNA methyltransferase TrmD family. Homodimer.

The protein resides in the cytoplasm. The catalysed reaction is guanosine(37) in tRNA + S-adenosyl-L-methionine = N(1)-methylguanosine(37) in tRNA + S-adenosyl-L-homocysteine + H(+). Its function is as follows. Specifically methylates guanosine-37 in various tRNAs. The chain is tRNA (guanine-N(1)-)-methyltransferase from Borrelia turicatae (strain 91E135).